The chain runs to 125 residues: Large ribosomal subunit protein bL12 (125 aa).

The protein belongs to the bacterial ribosomal protein bL12 family. In terms of assembly, homodimer. Part of the ribosomal stalk of the 50S ribosomal subunit. Forms a multimeric L10(L12)X complex, where L10 forms an elongated spine to which 2 to 4 L12 dimers bind in a sequential fashion. Binds GTP-bound translation factors.

Its function is as follows. Forms part of the ribosomal stalk which helps the ribosome interact with GTP-bound translation factors. Is thus essential for accurate translation. This is Large ribosomal subunit protein bL12 from Rickettsia typhi (strain ATCC VR-144 / Wilmington).